The chain runs to 212 residues: Protein RER1C (212 aa).

Methionine 1 is subject to N-acetylmethionine. A run of 4 helical transmembrane segments spans residues 55 to 75 (TVPH…IYIV), 82 to 102 (GFYI…IAFL), 135 to 155 (EFKF…MTFF), and 157 to 177 (VFDV…LFFL).

It belongs to the RER1 family.

It localises to the membrane. Functionally, involved in the retrieval of endoplasmic reticulum membrane proteins from the early Golgi compartment. The sequence is that of Protein RER1C (RER1C) from Arabidopsis thaliana (Mouse-ear cress).